We begin with the raw amino-acid sequence, 502 residues long: Glycerate kinase (502 aa).

Belongs to the glycerate kinase type-2 family.

The protein localises to the cytoplasm. It carries out the reaction (R)-glycerate + ATP = (2R)-3-phosphoglycerate + ADP + H(+). This chain is Glycerate kinase (glyctk), found in Danio rerio (Zebrafish).